Consider the following 229-residue polypeptide: Potassium/proton antiporter CemA (229 aa).

3 helical membrane passes run 6 to 26, 107 to 127, and 189 to 209; these read AFIPFFYFTSIVFLPWLISLC, ILHFSTNLISFVILSGYSFWG, and ILSGLVSTFPVILDTIFKYWI.

Belongs to the CemA family.

Its subcellular location is the plastid. It is found in the chloroplast inner membrane. The enzyme catalyses K(+)(in) + H(+)(out) = K(+)(out) + H(+)(in). Contributes to K(+)/H(+) antiport activity by supporting proton efflux to control proton extrusion and homeostasis in chloroplasts in a light-dependent manner to modulate photosynthesis. Prevents excessive induction of non-photochemical quenching (NPQ) under continuous-light conditions. Indirectly promotes efficient inorganic carbon uptake into chloroplasts. This is Potassium/proton antiporter CemA from Barbarea verna (Land cress).